A 409-amino-acid polypeptide reads, in one-letter code: Serine protease inhibitor 2 (409 aa).

An N-terminal signal peptide occupies residues 1 to 21 (MNKLNFVILCLAALLVFDATA). Asparagine 294 and asparagine 324 each carry an N-linked (GlcNAc...) asparagine glycan. A Hinge region; required for binding to peptidase motif is present at residues 356-360 (LGSEA).

Belongs to the serpin family. In terms of assembly, forms a covalent heterodimer with protease CLIPB9; the interaction inhibits CLIPB9 protease activity. Forms a covalent heterodimer with protease CLIPB10; the interaction inhibits CLIPB10 catalytic activity. Interacts with CLIPB4 in the hemolymph of immune-challenged female mosquitoes; the interaction results in CLIPB4 inhibition. In terms of processing, protease CLIPB9 binds to SRPN2 via the hinge region resulting in the cleavage of the reactive bond. This leads to a conformational change in SRPN2 which traps CLIPB9 and distorts its active site, resulting in CLIPB9 inactivation.

It localises to the secreted. Its function is as follows. Serine protease inhibitor that functions in the melanization-mediated immune response. By preventing the activation of phenoloxidases through the inhibiting of serine proteases CLIPB9, CLIPB10 and CLIPB4, negatively regulates melanization in the hemolymph. By preventing melanization, has a detrimental role during P.berghei parasite mediated-infection and invasion of the mosquito midgut. This is Serine protease inhibitor 2 from Anopheles gambiae (African malaria mosquito).